The chain runs to 345 residues: NADPH dehydrogenase (345 aa).

Serine 23–cysteine 26 is a binding site for FMN. Tyrosine 28 serves as a coordination point for substrate. FMN-binding residues include alanine 60 and glutamine 102. Histidine 164–histidine 167 contacts substrate. Residues arginine 215 and glycine 307 to arginine 308 each bind FMN.

It belongs to the NADH:flavin oxidoreductase/NADH oxidase family. NamA subfamily. In terms of assembly, homotetramer. The cofactor is FMN.

The catalysed reaction is A + NADPH + H(+) = AH2 + NADP(+). In terms of biological role, catalyzes the reduction of the double bond of an array of alpha,beta-unsaturated aldehydes and ketones. It also reduces the nitro group of nitroester and nitroaromatic compounds. It could have a role in detoxification processes. The sequence is that of NADPH dehydrogenase from Bacillus thuringiensis subsp. konkukian (strain 97-27).